The following is a 540-amino-acid chain: tRNA-2-methylthio-N(6)-dimethylallyladenosine synthase (540 aa).

The MTTase N-terminal domain occupies 4–120 (RSYEVRTFGC…LPVLLERARH (117 aa)). Cysteine 13, cysteine 49, cysteine 83, cysteine 157, cysteine 161, and cysteine 164 together coordinate [4Fe-4S] cluster. The region spanning 143-374 (RASHHSAWVS…ALQDEISWAE (232 aa)) is the Radical SAM core domain. The TRAM domain occupies 376-468 (RALVGRRVEV…PHHLTADGPL (93 aa)). The disordered stretch occupies residues 480–540 (WALGRDGDGG…ADACCTPVRR (61 aa)). Composition is skewed to low complexity over residues 492–502 (AAAQQPADGRP) and 520–533 (GPAS…GADA).

It belongs to the methylthiotransferase family. MiaB subfamily. As to quaternary structure, monomer. [4Fe-4S] cluster serves as cofactor.

The protein localises to the cytoplasm. The catalysed reaction is N(6)-dimethylallyladenosine(37) in tRNA + (sulfur carrier)-SH + AH2 + 2 S-adenosyl-L-methionine = 2-methylsulfanyl-N(6)-dimethylallyladenosine(37) in tRNA + (sulfur carrier)-H + 5'-deoxyadenosine + L-methionine + A + S-adenosyl-L-homocysteine + 2 H(+). Functionally, catalyzes the methylthiolation of N6-(dimethylallyl)adenosine (i(6)A), leading to the formation of 2-methylthio-N6-(dimethylallyl)adenosine (ms(2)i(6)A) at position 37 in tRNAs that read codons beginning with uridine. This is tRNA-2-methylthio-N(6)-dimethylallyladenosine synthase from Frankia casuarinae (strain DSM 45818 / CECT 9043 / HFP020203 / CcI3).